A 251-amino-acid polypeptide reads, in one-letter code: Cell division protein ZapD (251 aa).

This sequence belongs to the ZapD family. Interacts with FtsZ.

The protein localises to the cytoplasm. Functionally, cell division factor that enhances FtsZ-ring assembly. Directly interacts with FtsZ and promotes bundling of FtsZ protofilaments, with a reduction in FtsZ GTPase activity. In Burkholderia multivorans (strain ATCC 17616 / 249), this protein is Cell division protein ZapD.